The following is a 466-amino-acid chain: Rhodanese-like domain-containing protein 4, chloroplastic (466 aa).

The N-terminal 15 residues, 1 to 15, are a transit peptide targeting the chloroplast; that stretch reads MEALKTATFSPMSVL. The disordered stretch occupies residues 1–35; that stretch reads MEALKTATFSPMSVLSEKRSEPRKPFSLPNLFPPK. Residues 16–69 constitute a thylakoid transit peptide; sequence SEKRSEPRKPFSLPNLFPPKSQRPISQESFLKRFNGGLALLTSVLSSATAPAKS. A helical transmembrane segment spans residues 103–123; the sequence is PLVIAGGVAALAVPFVLSQVL. The 107-residue stretch at 144–250 folds into the Rhodanese domain; sequence TDDNAQLLDI…WLNSSLPWIE (107 aa). Residues 277–297 form a helical membrane-spanning segment; it reads VSVALGVAAAAGLSVFAFTEI. Residues 373-384 are compositionally biased toward low complexity; it reads EAESATATTTTV. Disordered regions lie at residues 373–392 and 426–466; these read EAES…PEPE and AQVI…PSQP. Over residues 455–466 the composition is skewed to pro residues; sequence LKPPSSPMPSQP.

Component of high molecular weight thylakoid LFNRs-containing protein complexes containing LIR1, LFNR1, LFNR2, TIC62 and TROL proteins. As to expression, expressed in leaves and stems, and at lower levels in flowers and siliques (at protein level).

It is found in the plastid. The protein localises to the chloroplast envelope. Its subcellular location is the chloroplast thylakoid membrane. In terms of biological role, rhodanese domain-containing protein required for anchoring ferredoxin--NADP reductase to the thylakoid membranes and sustaining efficient linear electron flow (LEF). This is Rhodanese-like domain-containing protein 4, chloroplastic from Arabidopsis thaliana (Mouse-ear cress).